Reading from the N-terminus, the 546-residue chain is Glutamate--tRNA ligase (546 aa).

The 'HIGH' region motif lies at 41–51 (PSPTGFQHIGG). The 'KMSKS' region signature appears at 293-297 (KLSKR). Lys-296 contributes to the ATP binding site.

The protein belongs to the class-I aminoacyl-tRNA synthetase family. Glutamate--tRNA ligase type 1 subfamily. As to quaternary structure, monomer.

The protein localises to the cytoplasm. It catalyses the reaction tRNA(Glu) + L-glutamate + ATP = L-glutamyl-tRNA(Glu) + AMP + diphosphate. Catalyzes the attachment of glutamate to tRNA(Glu) in a two-step reaction: glutamate is first activated by ATP to form Glu-AMP and then transferred to the acceptor end of tRNA(Glu). This Clostridium perfringens (strain 13 / Type A) protein is Glutamate--tRNA ligase.